The sequence spans 387 residues: NAD(P)H oxidoreductase RTN4IP1, mitochondrial (387 aa).

The transit peptide at Met1–Thr27 directs the protein to the mitochondrion. One can recognise an Enoyl reductase (ER) domain in the interval Gly38–Val379. NADPH contacts are provided by Ser200, Gly202, Val203, Ser223, Tyr241, Leu286, Gly327, Phe329, His372, Ala373, and Arg374.

Belongs to the zinc-containing alcohol dehydrogenase family. Quinone oxidoreductase subfamily.

The protein localises to the mitochondrion matrix. Its subcellular location is the mitochondrion outer membrane. The enzyme catalyses a 3-demethylubiquinone + NADH + 2 H(+) = a 3-demethylubiquinol + NAD(+). It catalyses the reaction a 3-demethylubiquinone + NADPH + 2 H(+) = a 3-demethylubiquinol + NADP(+). It carries out the reaction 3-demethylubiquinone-10 + NADH + 2 H(+) = 3-demethylubiquinol-10 + NAD(+). The catalysed reaction is 3-demethylubiquinone-10 + NADPH + 2 H(+) = 3-demethylubiquinol-10 + NADP(+). Its pathway is cofactor biosynthesis; ubiquinone biosynthesis. Its function is as follows. NAD(P)H oxidoreductase involved in the ubiquinone biosynthetic pathway. Required for the O-methyltransferase activity of COQ3. Able to catalyze the oxidoreduction of 3-demethylubiquinone into 3-demethylubiquinol in vitro. However, it is unclear if 3-demethylubiquinone constitutes a substrate in vivo. May also play a role in the regulation of retinal ganglion cell (RGC) neurite outgrowth, and hence in the development of the inner retina and optic nerve. The polypeptide is NAD(P)H oxidoreductase RTN4IP1, mitochondrial (rtn4ip1) (Danio rerio (Zebrafish)).